The following is a 341-amino-acid chain: Dehydration-responsive element-binding protein 2C (341 aa).

A Nuclear localization signal motif is present at residues 8-48; that stretch reads RKRKSRGTRDVAEILRQWREYNEQIEAESCIDGGGPKSIRK. The segment at 36 to 63 is disordered; it reads SCIDGGGPKSIRKPPPKGSRKGCMKGKG. The span at 45 to 59 shows a compositional bias: basic residues; that stretch reads SIRKPPPKGSRKGCM. A DNA-binding region (AP2/ERF) is located at residues 71–128; that stretch reads DYRGVRQRRWGKWVAEIREPDGGARLWLGTFSSSYEAALAYDEAAKAIYGQSARLNLP.

Belongs to the AP2/ERF transcription factor family. ERF subfamily.

Its subcellular location is the nucleus. Functionally, transcriptional activator that binds specifically to the DNA sequence 5'-[AG]CCGAC-3'. Binding to the C-repeat/DRE element mediates high salinity- and abscisic acid-inducible transcription. In Arabidopsis thaliana (Mouse-ear cress), this protein is Dehydration-responsive element-binding protein 2C (DREB2C).